Consider the following 177-residue polypeptide: Hypoxanthine phosphoribosyltransferase (177 aa).

Residues Arg-43 and Gly-44 each contribute to the diphosphate site. Position 99 (Glu-99) interacts with GMP. Glu-99 is an IMP binding site. Positions 99 and 100 each coordinate Mg(2+). Asp-103 (proton acceptor) is an active-site residue. GMP is bound by residues 103–108 (DSGKTL), Lys-131, and Asp-159. IMP is bound by residues 103 to 108 (DSGKTL) and Lys-131. Diphosphate is bound at residue Arg-165.

It belongs to the purine/pyrimidine phosphoribosyltransferase family. Homotetramer. The cofactor is Mg(2+).

The protein localises to the cytoplasm. It catalyses the reaction IMP + diphosphate = hypoxanthine + 5-phospho-alpha-D-ribose 1-diphosphate. The catalysed reaction is GMP + diphosphate = guanine + 5-phospho-alpha-D-ribose 1-diphosphate. Its pathway is purine metabolism; IMP biosynthesis via salvage pathway; IMP from hypoxanthine: step 1/1. In terms of biological role, purine salvage pathway enzyme which catalyzes the transfer of the ribosyl-5-phosphate group from 5-phospho-alpha-D-ribose 1-diphosphate (PRPP) to the N9 position of hypoxanthine to yield IMP (inosine 5'-monophosphate). To a lesser extent, can also act on guanine leading to GMP, but shows a highly less efficient activity with xanthine. The polypeptide is Hypoxanthine phosphoribosyltransferase (hpt) (Buchnera aphidicola subsp. Schizaphis graminum (strain Sg)).